Here is a 393-residue protein sequence, read N- to C-terminus: Reticulon-like protein 2 (393 aa).

Residues 1-21 show a composition bias toward low complexity; it reads MNRNTTTNKNANLNNSRNANA. The segment at 1–25 is disordered; that stretch reads MNRNTTTNKNANLNNSRNANAPGEA. Residues 1–60 lie on the Cytoplasmic side of the membrane; that stretch reads MNRNTTTNKNANLNNSRNANAPGEAGHQNKTGLIYWTNPSKSGASFAATLVSLLILRNVN. The Reticulon domain occupies 30 to 236; sequence KTGLIYWTNP…SISNENKSST (207 aa). A helical transmembrane segment spans residues 61–81; it reads VISVLLKIGYMVLFTSFAVEL. At 82–149 the chain is on the lumenal side; the sequence is STKVLFDKGV…IGVSLYFLHG (68 aa). The N-linked (GlcNAc...) asparagine glycan is linked to Asn137. A helical membrane pass occupies residues 150 to 170; sequence LFAIFSMNTVLIMTTIFLYTV. At 171–393 the chain is on the cytoplasmic side; sequence PLIYDRKQAR…HGLKQKLQHA (223 aa). Disordered regions lie at residues 214 to 313 and 339 to 393; these read IIPP…DVKT and GDYN…LQHA. The span at 220 to 285 shows a compositional bias: polar residues; sequence DEGSYSTSIS…PVSQNENIGT (66 aa). Phosphoserine is present on Ser278. Over residues 289-313 the composition is skewed to basic and acidic residues; it reads GKQEIPTEKDFNNRHENFSKPDVKT. Positions 365 to 376 are enriched in polar residues; that stretch reads PAESQSIPIKNN. A compositionally biased stretch (basic residues) spans 381–393; the sequence is KTTHGLKQKLQHA.

It is found in the endoplasmic reticulum membrane. The protein is Reticulon-like protein 2 (RTN2) of Saccharomyces cerevisiae (strain ATCC 204508 / S288c) (Baker's yeast).